Reading from the N-terminus, the 454-residue chain is Venom prothrombin activator porpharin-D (454 aa).

The N-terminal stretch at 1–20 is a signal peptide; sequence MAPQLLLCLILTFLWSLPEA. A propeptide spanning residues 21–40 is cleaved from the precursor; that stretch reads ESNVFLKSKEANRFLQRTKR. A Gla domain is found at 41-86; the sequence is SNSLFEEFRPGNIERECIEEKCSKEEAREIFKDNEKTEAFWNVYVD. Glu46, Glu47, Glu54, Glu56, Glu59, Glu60, Glu65, Glu66, Glu69, and Glu75 each carry 4-carboxyglutamate. The cysteines at positions 57 and 62 are disulfide-linked. Residues 86 to 122 enclose the EGF-like 1; calcium-binding domain; the sequence is DGDQCSSNPCHYGGTCKDGIGSYTCTCLPNYEGKNCE. 11 disulfides stabilise this stretch: Cys90–Cys101, Cys95–Cys110, Cys112–Cys121, Cys129–Cys140, Cys136–Cys149, Cys151–Cys164, Cys172–Cys316, Cys216–Cys221, Cys236–Cys252, Cys364–Cys378, and Cys389–Cys417. An O-linked (Hex...) serine glycan is attached at Ser92. In terms of domain architecture, EGF-like 2 spans 129-164; that stretch reads CRFFNGNCWHFCKPVQNDTQCSCAESYRLGDDGHSC. A propeptide spans 182–209 (activation peptide); it reads REASLPDFVQSQNATLLKKSDNPSPDIR. Residues 210–441 form the Peptidase S1 domain; the sequence is IINGMDCKLG…FIPWIKAVMR (232 aa). Catalysis depends on charge relay system residues His251 and Asp296. Residue Ser393 is the Charge relay system of the active site.

The protein belongs to the peptidase S1 family. Snake venom subfamily. Heterodimer of a light chain and a heavy chain; disulfide-linked. In terms of processing, the vitamin K-dependent, enzymatic carboxylation of some glutamate residues allows the modified protein to bind calcium. Expressed by the venom gland.

It localises to the secreted. It carries out the reaction Selective cleavage of Arg-|-Thr and then Arg-|-Ile bonds in prothrombin to form thrombin.. In terms of biological role, snake prothrombin activator that attacks the hemostatic system of prey. This protein is functionally similar to blood coagulation factor Xa. This is Venom prothrombin activator porpharin-D from Pseudechis porphyriacus (Red-bellied black snake).